The sequence spans 66 residues: Large ribosomal subunit protein bL31 (66 aa).

Residues Cys16, Cys18, Cys36, and Cys39 each contribute to the Zn(2+) site.

This sequence belongs to the bacterial ribosomal protein bL31 family. Type A subfamily. In terms of assembly, part of the 50S ribosomal subunit. Zn(2+) is required as a cofactor.

Functionally, binds the 23S rRNA. This Clostridioides difficile (strain 630) (Peptoclostridium difficile) protein is Large ribosomal subunit protein bL31.